The chain runs to 464 residues: Protein ABHD18 (464 aa).

An N-terminal signal peptide occupies residues methionine 1 to glycine 24. N-linked (GlcNAc...) asparagine glycosylation occurs at asparagine 341.

This sequence belongs to the AB hydrolase superfamily.

It is found in the secreted. In Mus musculus (Mouse), this protein is Protein ABHD18.